The primary structure comprises 129 residues: uncharacterized protein (129 aa).

The protein belongs to the HesB/IscA family.

This is an uncharacterized protein from Buchnera aphidicola subsp. Schizaphis graminum (strain Sg).